We begin with the raw amino-acid sequence, 666 residues long: DNA-directed RNA polymerase subunit beta' (666 aa).

Zn(2+) contacts are provided by cysteine 69, cysteine 71, cysteine 87, and cysteine 90. The Mg(2+) site is built by aspartate 489, aspartate 491, and aspartate 493.

This sequence belongs to the RNA polymerase beta' chain family. RpoC1 subfamily. In terms of assembly, in plastids the minimal PEP RNA polymerase catalytic core is composed of four subunits: alpha, beta, beta', and beta''. When a (nuclear-encoded) sigma factor is associated with the core the holoenzyme is formed, which can initiate transcription. It depends on Mg(2+) as a cofactor. Requires Zn(2+) as cofactor.

It localises to the plastid. It is found in the chloroplast. It catalyses the reaction RNA(n) + a ribonucleoside 5'-triphosphate = RNA(n+1) + diphosphate. Functionally, DNA-dependent RNA polymerase catalyzes the transcription of DNA into RNA using the four ribonucleoside triphosphates as substrates. The polypeptide is DNA-directed RNA polymerase subunit beta' (Chara vulgaris (Common stonewort)).